Reading from the N-terminus, the 1010-residue chain is 2-oxoglutarate dehydrogenase-like, mitochondrial (1010 aa).

The N-terminal 107 residues, 1–107 (MSQLRLLLFR…RASVSSCTKT (107 aa)), are a transit peptide targeting the mitochondrion. Positions 28–47 (GGRRRSSGPPTTIPRSRGGV) are disordered. H130, D143, and D145 together coordinate Ca(2+). Residues R299, D398, N431, I433, and Q663 each coordinate thiamine diphosphate. Positions 398, 431, and 433 each coordinate Mg(2+).

The protein belongs to the alpha-ketoglutarate dehydrogenase family. In terms of assembly, the OGDHC complex comprises multiple copies of three catalytic enzyme components, the 2-oxoglutarate dehydrogenase (OGDH/E1), the dihydrolipoamide dehydrogenase (DLST/E2) and the dihydrolipoamide dehydrogenase (DLD/E3). OGDHL/E1-like isoenzyme may replace OGDH in the OGDHC complex in the brain. The presence of either ODGH/E1 or ODGHL/E1-like isoenzyme in the complex may depend on its tissular distribution. Thiamine diphosphate serves as cofactor. Mg(2+) is required as a cofactor. The OGDHL-containing OGDHC complex is present in the brain, but not in the heart.

It is found in the mitochondrion matrix. It catalyses the reaction N(6)-[(R)-lipoyl]-L-lysyl-[protein] + 2-oxoglutarate + H(+) = N(6)-[(R)-S(8)-succinyldihydrolipoyl]-L-lysyl-[protein] + CO2. 2-oxoglutarate dehydrogenase (E1-like) component of the 2-oxoglutarate dehydrogenase multienzyme complex (OGDHC) which mediates the decarboxylation of alpha-ketoglutarate in the tricarboxylic acid cycle. The OGDHC complex catalyzes the overall conversion of 2-oxoglutarate to succinyl-CoA and CO(2) while reducing NAD(+) to NADH. The OGDHC complex is mainly active in the mitochondrion. Involved in the inhibition of cell proliferation and in apoptosis. The sequence is that of 2-oxoglutarate dehydrogenase-like, mitochondrial from Rattus norvegicus (Rat).